Reading from the N-terminus, the 217-residue chain is Glycerol-3-phosphate acyltransferase (217 aa).

The next 5 helical transmembrane spans lie at 1–21 (MAWA…SIPT), 54–74 (TAAI…VGGV), 84–104 (AIVP…AAIL), 126–146 (VLLV…LFML), and 165–185 (LLML…LAGI).

Belongs to the PlsY family. In terms of assembly, probably interacts with PlsX.

Its subcellular location is the cell inner membrane. It carries out the reaction an acyl phosphate + sn-glycerol 3-phosphate = a 1-acyl-sn-glycero-3-phosphate + phosphate. It functions in the pathway lipid metabolism; phospholipid metabolism. In terms of biological role, catalyzes the transfer of an acyl group from acyl-phosphate (acyl-PO(4)) to glycerol-3-phosphate (G3P) to form lysophosphatidic acid (LPA). This enzyme utilizes acyl-phosphate as fatty acyl donor, but not acyl-CoA or acyl-ACP. In Rippkaea orientalis (strain PCC 8801 / RF-1) (Cyanothece sp. (strain PCC 8801)), this protein is Glycerol-3-phosphate acyltransferase.